Here is a 391-residue protein sequence, read N- to C-terminus: Zinc finger protein ubi-d4 (391 aa).

At Ala2 the chain carries N-acetylalanine. Residues Lys10, Lys99, Lys107, and Lys108 each participate in a glycyl lysine isopeptide (Lys-Gly) (interchain with G-Cter in SUMO2) cross-link. 2 disordered regions span residues 79-146 (WRKK…LGEF) and 165-196 (DDLDDEDYEEDTPKRRGKGKSKGKGVGSARKK). 2 stretches are compositionally biased toward basic and acidic residues: residues 100-110 (PDTDQTLKKEG) and 126-140 (DPLEKRGAPDPRVDD). Ser142 carries the phosphoserine modification. Over residues 165–174 (DDLDDEDYEE) the composition is skewed to acidic residues. A Phosphotyrosine modification is found at Tyr172. The residue at position 176 (Thr176) is a Phosphothreonine. Glycyl lysine isopeptide (Lys-Gly) (interchain with G-Cter in SUMO2) cross-links involve residues Lys178 and Lys196. A Phosphoserine modification is found at Ser200. The C2H2-type zinc-finger motif lies at 209–232 (YACDICGKRYKNRPGLSYHYAHSH). Residues 233-266 (LAEEEGEDKEDSQPPTPVSQRSEEQKSKKGPDGL) are disordered. Position 244 is a phosphoserine (Ser244). Residues 253–263 (RSEEQKSKKGP) show a composition bias toward basic and acidic residues. 2 consecutive PHD-type zinc fingers follow at residues 270–330 (NNYC…CKCC) and 327–377 (CKCC…CLDL). Ser280 bears the Phosphoserine mark. Lys281 is covalently cross-linked (Glycyl lysine isopeptide (Lys-Gly) (interchain with G-Cter in SUMO2)).

This sequence belongs to the requiem/DPF family. Interacts with the nucleosomes, in particular nucleosomes bearing histone H3 crotonylated at 'Lys-14' (H3K14cr) for which DPF2 has high affinity. Also interacts (via PHD-type zinc finger domains) with histone H3 butyrylated at 'Lys-14' (H3K14bu), histone H3 propionylated at 'Lys-14' (H3K14pr), and histone H3 acetylated at 'Lys-14' (H3K14ac). Interacts with histone H3 acetylated at 'Lys-9' (H3K9ac), histone H3 di-methylated at 'Lys-9' (H3K9me2), and histone H3 tri-methylated at 'Lys-9' (H3K9me3). Interacts with histone H4 acetylated at 'Lys-12' (H4K12ac). Interacts with histone H4 acetylated at 'Lys-16' (H4K16ac). Interacts with SWI/SNF complex components. Interacts with SMARCA2, SMARCA4, SMARCB1 and SMARCD1. Interacts with SMARCC1, SMARCC2 and ACTL6A. Interacts with RUNX1. Ubiquitous.

The protein localises to the nucleus. The protein resides in the cytoplasm. In terms of biological role, plays an active role in transcriptional regulation by binding modified histones H3 and H4. Is a negative regulator of myeloid differentiation of hematopoietic progenitor cells. Might also have a role in the development and maturation of lymphoid cells. Involved in the regulation of non-canonical NF-kappa-B pathway. In Homo sapiens (Human), this protein is Zinc finger protein ubi-d4 (DPF2).